A 93-amino-acid chain; its full sequence is Parbolysin P3 (93 aa).

3 disulfide bridges follow: C16–C37, C22–C33, and C47–C60.

This sequence belongs to the worm cytolysin family. As to expression, localized within the skin and proboscis and are most readily isolated from body mucus secretions.

The protein localises to the secreted. Functionally, cytolysin that shows hemolytic activity (on bovine erythrocytes, HC(50)=5.75 mg/ml). This hemolytic activity is completely inhibited by small unilamelar vesicles composed of PC/PG, PC/PI and PC/PS in 1:1 molar ratios (with at least 100 mg/ml concentration). This is Parbolysin P3 from Parborlasia corrugatus (Antarctic nemertean worm).